Consider the following 110-residue polypeptide: NADH-quinone oxidoreductase subunit K (110 aa).

3 helical membrane-spanning segments follow: residues 13–33 (LNHYLILSSLVFTIGMFGLFM), 41–61 (ILMSIELMLLAVNINFVAFSI), and 73–93 (IIILTVAAAETSIGLAILLIY).

It belongs to the complex I subunit 4L family. As to quaternary structure, NDH-1 is composed of 14 different subunits. Subunits NuoA, H, J, K, L, M, N constitute the membrane sector of the complex.

The protein localises to the cell inner membrane. It carries out the reaction a quinone + NADH + 5 H(+)(in) = a quinol + NAD(+) + 4 H(+)(out). Functionally, NDH-1 shuttles electrons from NADH, via FMN and iron-sulfur (Fe-S) centers, to quinones in the respiratory chain. The immediate electron acceptor for the enzyme in this species is believed to be ubiquinone. Couples the redox reaction to proton translocation (for every two electrons transferred, four hydrogen ions are translocated across the cytoplasmic membrane), and thus conserves the redox energy in a proton gradient. The sequence is that of NADH-quinone oxidoreductase subunit K from Rickettsia conorii (strain ATCC VR-613 / Malish 7).